A 513-amino-acid polypeptide reads, in one-letter code: L-threonine dehydratase biosynthetic IlvA (513 aa).

Position 61 is an N6-(pyridoxal phosphate)lysine (lysine 61). Pyridoxal 5'-phosphate is bound by residues asparagine 88, 187–191 (GGGGL), and serine 314. 2 consecutive ACT-like domains span residues 338–409 (ALLA…DLSN) and 432–504 (RLYS…DVTE).

It belongs to the serine/threonine dehydratase family. As to quaternary structure, homotetramer. Requires pyridoxal 5'-phosphate as cofactor.

It carries out the reaction L-threonine = 2-oxobutanoate + NH4(+). It participates in amino-acid biosynthesis; L-isoleucine biosynthesis; 2-oxobutanoate from L-threonine: step 1/1. In terms of biological role, catalyzes the anaerobic formation of alpha-ketobutyrate and ammonia from threonine in a two-step reaction. The first step involved a dehydration of threonine and a production of enamine intermediates (aminocrotonate), which tautomerizes to its imine form (iminobutyrate). Both intermediates are unstable and short-lived. The second step is the nonenzymatic hydrolysis of the enamine/imine intermediates to form 2-ketobutyrate and free ammonia. In the low water environment of the cell, the second step is accelerated by RidA. The polypeptide is L-threonine dehydratase biosynthetic IlvA (ilvA) (Pasteurella multocida (strain Pm70)).